The sequence spans 264 residues: MKQYHDLIKTVLEHGVKKEDRTGTGTISMFGYQMRYNLQEGFPLLTTKKLHTRSIFHELLWFLKGETNIKYLHDNKVTIWDEWADENGNLGPVYGKQWRSWETADGRTIDQITNVVEQIKKNPNSRRMLVVAFNPGDVDKMALPPCHAFFQFYVANGKLSCQLYQRSADIFLGVPFNIASYALLTHMIAQVCDLEVGDFVHTLGDAHLYLNHLEQANLQLTREFRPLPQLKLNPAKKDLFDFTYEDIEIIGYDPHPAIKAEVAV.

R21 serves as a coordination point for dUMP. H51 contributes to the (6R)-5,10-methylene-5,6,7,8-tetrahydrofolate binding site. 126 to 127 contributes to the dUMP binding site; it reads RR. The active-site Nucleophile is the C146. DUMP contacts are provided by residues 166–169, N177, and 207–209; these read RSAD and HLY. D169 serves as a coordination point for (6R)-5,10-methylene-5,6,7,8-tetrahydrofolate. A263 contributes to the (6R)-5,10-methylene-5,6,7,8-tetrahydrofolate binding site.

It belongs to the thymidylate synthase family. Bacterial-type ThyA subfamily. As to quaternary structure, homodimer.

The protein localises to the cytoplasm. It carries out the reaction dUMP + (6R)-5,10-methylene-5,6,7,8-tetrahydrofolate = 7,8-dihydrofolate + dTMP. It functions in the pathway pyrimidine metabolism; dTTP biosynthesis. Its function is as follows. Catalyzes the reductive methylation of 2'-deoxyuridine-5'-monophosphate (dUMP) to 2'-deoxythymidine-5'-monophosphate (dTMP) while utilizing 5,10-methylenetetrahydrofolate (mTHF) as the methyl donor and reductant in the reaction, yielding dihydrofolate (DHF) as a by-product. This enzymatic reaction provides an intracellular de novo source of dTMP, an essential precursor for DNA biosynthesis. This is Thymidylate synthase from Bdellovibrio bacteriovorus (strain ATCC 15356 / DSM 50701 / NCIMB 9529 / HD100).